A 1170-amino-acid chain; its full sequence is DNA excision repair protein ERCC-5 (1170 aa).

Positions 1-78 (MGVQGLWKLL…RIRPIFVFDG (78 aa)) are N-domain. Lysine 8 is modified (N6-acetyllysine). Aspartate 30 contacts Mg(2+). The tract at residues 31–67 (ISIWLNQALKGVRDSHGNVIENAHLLTLFHRLCKLLF) is DNA-binding; may bind to the undamaged single-strand DNA of the DNA repair bubble. Residue aspartate 77 coordinates Mg(2+). A spacer region region spans residues 79–784 (DAPLLKKQTL…LRLFGVPYIQ (706 aa)). Disordered stretches follow at residues 304 to 479 (DSES…RCDT), 520 to 587 (HVSG…PKAC), and 600 to 701 (LENA…ECLL). Residues 306–323 (ESLPSSSNVHSVSSNLKS) are compositionally biased toward low complexity. Basic and acidic residues-rich tracts occupy residues 324 to 336 (SPHE…REPE) and 363 to 373 (SREGRQSKERN). At serine 384 the chain carries Phosphoserine. Residues 455–474 (TSGSSANGQTDSAHSFTTAS) are compositionally biased toward polar residues. The segment covering 539 to 551 (THSDQGIDIHPED) has biased composition (basic and acidic residues). Polar residues predominate over residues 659 to 676 (SVVSNSELQTESSEASTH). Over residues 677 to 698 (LSEKDAEEPRETLEEGTSRDTE) the composition is skewed to basic and acidic residues. Phosphoserine is present on residues serine 704 and serine 705. The tract at residues 785–880 (APMEAEAQCA…VTAMEILNEF (96 aa)) is I-domain. The Mg(2+) site is built by glutamate 788, glutamate 790, aspartate 809, and aspartate 811. Residues 819-835 (HVYKNFFNKNKFVEYYQ) are DNA-binding; may bind to the undamaged single-strand DNA of the DNA repair bubble. Residues 847 to 879 (RNKLINLAYLLGSDYTEGIPTVGCVTAMEILNE) are DNA-binding; H2TH (helix-2turn-helix) motif which binds double-stranded DNA. Mg(2+) is bound at residue aspartate 860. Residues 911–917 (TKVKKKL) are DNA-binding; may bind double-stranded DNA. An interaction with PCNA region spans residues 980-1008 (LKHLNAHQTQLRIDSFFRLAQQEKQDAKL). Residues 1010 to 1170 (KSHRLNRAVT…KSMKRRKKKT (161 aa)) form an interaction with ERCC6/CSB region. A disordered region spans residues 1033–1146 (LTKVTEALDD…DDEDKAKTVL (114 aa)). The span at 1041 to 1060 (DDAKGKTQKRELPYKKETSV) shows a compositional bias: basic and acidic residues. The Nuclear localization signal 1 motif lies at 1049 to 1065 (KRELPYKKETSVPKRRR). The segment covering 1094–1110 (SVMSARQRSAAESSKIS) has biased composition (polar residues). The short motif at 1153–1170 (FGKKKLKLKSMKRRKKKT) is the Nuclear localization signal 2 element.

The protein belongs to the XPG/RAD2 endonuclease family. XPG subfamily. In terms of assembly, monomer. Homodimer. Component of the homologous recombination repair (HR) complex composed of ERCC5/XPG, BRCA2, PALB2, DSS1 and RAD51. Within the complex, interacts with BRCA2 and PALB2. Interacts with RNA polymerase II. Interacts (via C-terminus) with ERCC6/CSB; the interaction stimulates ERCC6/CSB binding to the DNA repair bubble and ERCC6/CSB ATPase activity. May form a complex composed of RNA polymerase II, ERCC6/CSB and ERCC5/XPG which associates with the DNA repair bubble during transcription-coupled nucleotide excision repair. Interacts with BRCA1; the interaction promotes the release of BRCA1 from DNA. Interacts with PCNA. Interacts with NTHL1; the interaction stimulates NTHL1 activity and NTHL1 binding to its DNA substrate. Mg(2+) serves as cofactor.

It is found in the nucleus. The protein resides in the chromosome. Single-stranded structure-specific DNA endonuclease involved in DNA excision repair. Makes the 3'incision in DNA nucleotide excision repair (NER). Binds and bends DNA repair bubble substrate and breaks base stacking at the single-strand/double-strand DNA junction of the DNA bubble. Plays a role in base excision repair (BER) by promoting the binding of DNA glycosylase NTHL1 to its substrate and increasing NTHL1 catalytic activity that removes oxidized pyrimidines from DNA. Involved in transcription-coupled nucleotide excision repair (TCR) which allows RNA polymerase II-blocking lesions to be rapidly removed from the transcribed strand of active genes. Functions during the initial step of TCR in cooperation with ERCC6/CSB to recognized stalled RNA polymerase II. Also, stimulates ERCC6/CSB binding to the DNA repair bubble and ERCC6/CSB ATPase activity. Required for DNA replication fork maintenance and preservation of genomic stability. Involved in homologous recombination repair (HRR) induced by DNA replication stress by recruiting RAD51, BRCA2, and PALB2 to the damaged DNA site. During HRR, binds to the replication fork with high specificity and stabilizes it. Also, acts upstream of HRR, to promote the release of BRCA1 from DNA. The protein is DNA excision repair protein ERCC-5 (Ercc5) of Mus musculus (Mouse).